The following is a 195-amino-acid chain: Pyruvoyl-dependent arginine decarboxylase AaxB (195 aa).

At serine 53 the chain carries Pyruvic acid (Ser).

It belongs to the pyruvoyl-dependent arginine decarboxylase family. In terms of assembly, trimer of an alpha-beta dimer. It depends on pyruvate as a cofactor.

It localises to the cytoplasm. The catalysed reaction is L-arginine + H(+) = agmatine + CO2. Part of the AaxABC system, catalyzes the decarboxylation of L-arginine. The arginine uptake by the bacterium in the macrophage may be a virulence factor against the host innate immune response. The protein is Pyruvoyl-dependent arginine decarboxylase AaxB (aaxB) of Chlamydia muridarum (strain MoPn / Nigg).